A 372-amino-acid polypeptide reads, in one-letter code: NAD(P)H-quinone oxidoreductase subunit 1 (372 aa).

A run of 8 helical transmembrane segments spans residues I27–V47, I97–V117, V128–M148, L176–V196, I204–L224, I266–V286, S308–L328, and F347–P367.

This sequence belongs to the complex I subunit 1 family. NDH-1 is composed of at least 11 different subunits.

The protein resides in the cellular thylakoid membrane. The catalysed reaction is a plastoquinone + NADH + (n+1) H(+)(in) = a plastoquinol + NAD(+) + n H(+)(out). The enzyme catalyses a plastoquinone + NADPH + (n+1) H(+)(in) = a plastoquinol + NADP(+) + n H(+)(out). In terms of biological role, NDH-1 shuttles electrons from an unknown electron donor, via FMN and iron-sulfur (Fe-S) centers, to quinones in the respiratory and/or the photosynthetic chain. The immediate electron acceptor for the enzyme in this species is believed to be plastoquinone. Couples the redox reaction to proton translocation, and thus conserves the redox energy in a proton gradient. The protein is NAD(P)H-quinone oxidoreductase subunit 1 of Prochlorococcus marinus (strain AS9601).